Consider the following 715-residue polypeptide: Formate dehydrogenase H (715 aa).

In terms of domain architecture, 4Fe-4S Mo/W bis-MGD-type spans 1–56 (MKKVVTVCPYCASGCKINLVVDNGKIVRAEAAQGKTNQGTLCLKGYYGWDFINDTQ). Residues Cys8, Cys11, Cys15, and Cys42 each coordinate [4Fe-4S] cluster. Lys44 acts as the Electron donor/acceptor in catalysis. Mo-bis(molybdopterin guanine dinucleotide) contacts are provided by Arg110, Sec140, Asn176, Asp179, Ser180, Cys201, Asp202, Arg204, Gly221, Asn223, Met297, Gln335, Asp404, Thr408, Gln428, Asp429, Ser445, Asp478, Arg581, Glu582, His585, Ser587, Tyr678, and Lys679. Catalysis depends on Sec140, which acts as the Proton donor/acceptor. A non-standard amino acid (selenocysteine) is located at residue Sec140.

This sequence belongs to the prokaryotic molybdopterin-containing oxidoreductase family. Consists of two separable enzymatic activities: a formate dehydrogenase component (FDH-H) and hydrogenase-3. It depends on [4Fe-4S] cluster as a cofactor. Mo-bis(molybdopterin guanine dinucleotide) is required as a cofactor.

It catalyses the reaction formate + A + H(+) = AH2 + CO2. Its activity is regulated as follows. Inhibited by aerobic conditions. Functionally, decomposes formic acid to hydrogen and carbon dioxide under anaerobic conditions in the absence of exogenous electron acceptors. This Escherichia coli (strain K12) protein is Formate dehydrogenase H (fdhF).